The chain runs to 109 residues: UPF0060 membrane protein RHA1_ro06609 (109 aa).

4 consecutive transmembrane segments (helical) span residues 7 to 27, 33 to 53, 62 to 82, and 88 to 108; these read VALF…VWQG, GWIW…VATL, ILAA…MVAD, and RWDV…MYAP.

Belongs to the UPF0060 family.

The protein localises to the cell membrane. This chain is UPF0060 membrane protein RHA1_ro06609, found in Rhodococcus jostii (strain RHA1).